The chain runs to 75 residues: uncharacterized protein (75 aa).

A helical transmembrane segment spans residues 44-64 (IINMIVIWAALIALFVKLYIL).

It is found in the host membrane. This is an uncharacterized protein from Ostreid herpesvirus 1 (isolate France) (OsHV-1).